The chain runs to 878 residues: Multiple C2 and transmembrane domain-containing protein 2 (878 aa).

Disordered regions lie at residues 20 to 40 (LINLSKKKAKKSPSKPLDLRV) and 143 to 178 (KPSLGRDAPEEHDKTHGNDDLNASMTSQHFEEESTL). Over residues 149-161 (DAPEEHDKTHGND) the composition is skewed to basic and acidic residues. C2 domains lie at 177–292 (TLGE…EHIL), 334–452 (SKSS…CLEL), and 486–607 (PSER…CYVL). Residues D210, D216, D263, D265, and D270 each coordinate Ca(2+). Residues D525, D531, D577, D579, and D585 each coordinate Ca(2+). Residues 694-714 (FVVFLVTVWNFELYMIPLALL) traverse the membrane as a helical segment. The segment at 728 to 752 (KASSTQDSQESTDVEEEGKEEEKES) is disordered. Residues 737-746 (ESTDVEEEGK) are compositionally biased toward acidic residues. The chain crosses the membrane as a helical span at residues 794-814 (PFLSLLACLILAITTVILYFI).

It belongs to the MCTP family. Ca(2+) is required as a cofactor.

It localises to the membrane. In terms of biological role, might play a role in the development of cardiac outflow tract. The chain is Multiple C2 and transmembrane domain-containing protein 2 (Mctp2) from Mus musculus (Mouse).